Consider the following 362-residue polypeptide: Biotin synthase (362 aa).

Residues 70–305 enclose the Radical SAM core domain; sequence CCGNVVDLCS…QQIIRYAGGR (236 aa). The [4Fe-4S] cluster site is built by cysteine 88, cysteine 92, and cysteine 95. Cysteine 133, cysteine 170, cysteine 230, and arginine 300 together coordinate [2Fe-2S] cluster.

Belongs to the radical SAM superfamily. Biotin synthase family. As to quaternary structure, homodimer. The cofactor is [4Fe-4S] cluster. Requires [2Fe-2S] cluster as cofactor.

The enzyme catalyses (4R,5S)-dethiobiotin + (sulfur carrier)-SH + 2 reduced [2Fe-2S]-[ferredoxin] + 2 S-adenosyl-L-methionine = (sulfur carrier)-H + biotin + 2 5'-deoxyadenosine + 2 L-methionine + 2 oxidized [2Fe-2S]-[ferredoxin]. It participates in cofactor biosynthesis; biotin biosynthesis; biotin from 7,8-diaminononanoate: step 2/2. Catalyzes the conversion of dethiobiotin (DTB) to biotin by the insertion of a sulfur atom into dethiobiotin via a radical-based mechanism. The polypeptide is Biotin synthase (Synechocystis sp. (strain ATCC 27184 / PCC 6803 / Kazusa)).